The following is a 248-amino-acid chain: 2-C-methyl-D-erythritol 4-phosphate cytidylyltransferase (248 aa).

It belongs to the IspD/TarI cytidylyltransferase family. IspD subfamily.

It catalyses the reaction 2-C-methyl-D-erythritol 4-phosphate + CTP + H(+) = 4-CDP-2-C-methyl-D-erythritol + diphosphate. It participates in isoprenoid biosynthesis; isopentenyl diphosphate biosynthesis via DXP pathway; isopentenyl diphosphate from 1-deoxy-D-xylulose 5-phosphate: step 2/6. Its function is as follows. Catalyzes the formation of 4-diphosphocytidyl-2-C-methyl-D-erythritol from CTP and 2-C-methyl-D-erythritol 4-phosphate (MEP). In Corynebacterium efficiens (strain DSM 44549 / YS-314 / AJ 12310 / JCM 11189 / NBRC 100395), this protein is 2-C-methyl-D-erythritol 4-phosphate cytidylyltransferase.